A 328-amino-acid chain; its full sequence is 3-dehydroquinate synthase (328 aa).

It belongs to the archaeal-type DHQ synthase family.

The catalysed reaction is 2-amino-2,3,7-trideoxy-D-lyxo-hept-6-ulosonate + NAD(+) + H2O = 3-dehydroquinate + NH4(+) + NADH + H(+). Functionally, catalyzes the oxidative deamination and cyclization of 2-amino-3,7-dideoxy-D-threo-hept-6-ulosonic acid (ADH) to yield 3-dehydroquinate (DHQ), which is fed into the canonical shikimic pathway of aromatic amino acid biosynthesis. The polypeptide is 3-dehydroquinate synthase (Methanospirillum hungatei JF-1 (strain ATCC 27890 / DSM 864 / NBRC 100397 / JF-1)).